Here is a 487-residue protein sequence, read N- to C-terminus: UL37 immediate early glycoprotein (487 aa).

A signal peptide spans 1–22 (MSPVYVNLLGSVGLLAFWYFSY). Acidic residues predominate over residues 83–107 (GEESVTEDTEREDTEEEREDEEEEN). The segment at 83–121 (GEESVTEDTEREDTEEEREDEEEENEARTPEVNPIDAEG) is disordered. N-linked (GlcNAc...) asparagine; by host glycans are attached at residues asparagine 206, asparagine 210, asparagine 219, asparagine 223, asparagine 242, asparagine 246, asparagine 275, asparagine 281, asparagine 294, asparagine 297, asparagine 306, asparagine 333, asparagine 337, asparagine 343, asparagine 379, asparagine 384, and asparagine 391. A helical membrane pass occupies residues 433 to 459 (WALLSICTVAAGSIALLSLFCILLIGL).

This sequence belongs to the immediate early glycoprotein family. Interacts with host BAX. Interacts with host RSAD2/viperin; this interaction results in RSAD2/viperin relocalization from the endoplasmic reticulum to the mitochondria, actin cytoskeleton disruption and enhancement of infection. Interacts with host PEX19; this interaction inhibits the peroxisomal-dependent antiviral signaling. Interacts with host CHCHD6; this interaction rewires mitochondria by engaging the conserved MICOS complex.

It localises to the host endoplasmic reticulum membrane. The protein localises to the host Golgi apparatus membrane. Its subcellular location is the host mitochondrion membrane. The protein resides in the host peroxisome. Its function is as follows. Multifunctional transmembrane protein that plays several key roles in viral replication. Rapidely traffics from the host endoplasmic reticulum to the outer mitochondrial membrane where it acts to inhibit host immune response, block apoptotic signaling, regulate calcium flux, and induce mitochondrial fragmentation. Sequesters proapoptotic BAX at the outer mitochondrial membrane and prevents cytochrome c release and subsequent initiation of the proapoptotic cascade. Also provoques a calcium efflux from host endoplasmic reticulum and F-actin cytoskeleton disruption. Participates in the increase of host mitochondrial biogenesis, thus promoting viral replication by efficient use of newly made mitochondria. Additionally, a subset of vMIA localizes to peroxisomes, causing fragmentation and blocking peroxisomal MAVS signaling. Mechanistically, inhibits host MAVS oligomerization at peroxisomes in a mitochondrial fission factors (MFF)-dependent manner and in mitochondria independently of mitochondrial fission factors. Plays an essential role in the trafficking of host viperin/RSAD2 from the endoplasmic reticulum to the viral assembly compartment via the mitochondria during viral infection as failure of viperin to localize to the mitochondria results in insufficient lipogenesis and thus reduces viral replication. May play a role in escape from the host antiviral response. The polypeptide is UL37 immediate early glycoprotein (UL37) (Human cytomegalovirus (strain AD169) (HHV-5)).